A 63-amino-acid polypeptide reads, in one-letter code: Large ribosomal subunit protein uL29 (63 aa).

Belongs to the universal ribosomal protein uL29 family.

The sequence is that of Large ribosomal subunit protein uL29 from Sodalis glossinidius (strain morsitans).